The primary structure comprises 182 residues: Proline-rich protein, Y-linked (182 aa).

2 disordered regions span residues 1 to 22 (MMRR…KPRD) and 89 to 108 (VPAD…PPPG). A compositionally biased stretch (pro residues) spans 91–108 (ADPPPASPYRTSPRPPPG). A DUF1725 domain is found at 154 to 167 (WMKLETIILSKLSQ).

This Homo sapiens (Human) protein is Proline-rich protein, Y-linked (PRORY).